The sequence spans 310 residues: tRNA pseudouridine synthase B (310 aa).

Catalysis depends on Asp49, which acts as the Nucleophile.

This sequence belongs to the pseudouridine synthase TruB family. Type 1 subfamily.

It catalyses the reaction uridine(55) in tRNA = pseudouridine(55) in tRNA. Responsible for synthesis of pseudouridine from uracil-55 in the psi GC loop of transfer RNAs. The polypeptide is tRNA pseudouridine synthase B (Idiomarina loihiensis (strain ATCC BAA-735 / DSM 15497 / L2-TR)).